Consider the following 221-residue polypeptide: Very-long-chain (3R)-3-hydroxyacyl-CoA dehydratase PASTICCINO 2A (221 aa).

Residues 1 to 11 lie on the Cytoplasmic side of the membrane; the sequence is MAGVGSAVRRL. The chain crosses the membrane as a helical span at residues 12 to 32; sequence YLSVYNWAVFFGWAQVLYYAV. Over 33-51 the chain is Lumenal; it reads TTLLESGHEAVYAAVERPL. A helical transmembrane segment spans residues 52–70; that stretch reads QFAQTAAFLEILHGLVGLV. Topologically, residues 71–76 are cytoplasmic; sequence RSPVSA. A helical membrane pass occupies residues 77-95; it reads TLPQIGSRLFLTWGILWSF. The Lumenal portion of the chain corresponds to 96–100; the sequence is PETHS. Residues 101–121 traverse the membrane as a helical segment; it reads HILVTSLVISWSITEIIRYSF. The Cytoplasmic portion of the chain corresponds to 122 to 141; the sequence is FGMKEAFGFAPSWLLWLRYS. Residues 142–165 traverse the membrane as a helical segment; it reads TFMVLYPTGISSEVGLIYIALPYM. Active-site residues include Tyr147 and Glu154. The Lumenal portion of the chain corresponds to 166–184; sequence KASEKYCLRMPNKWNFSFD. The helical transmembrane segment at 185-209 threads the bilayer; that stretch reads FFYASILSLAIYVPGSPHMFTYMLA. Residues 210–221 lie on the Cytoplasmic side of the membrane; sequence QRKKALAKAKAA.

Belongs to the very long-chain fatty acids dehydratase HACD family.

It localises to the endoplasmic reticulum membrane. The catalysed reaction is a very-long-chain (3R)-3-hydroxyacyl-CoA = a very-long-chain (2E)-enoyl-CoA + H2O. The protein operates within lipid metabolism; fatty acid biosynthesis. Catalyzes the third of the four reactions of the long-chain fatty acids elongation cycle. This endoplasmic reticulum-bound enzymatic process, allows the addition of two carbons to the chain of long- and very long-chain fatty acids/VLCFAs per cycle. This enzyme catalyzes the dehydration of the 3-hydroxyacyl-CoA intermediate into trans-2,3-enoyl-CoA, within each cycle of fatty acid elongation. Thereby, it participates in the production of VLCFAs of different chain lengths that are involved in multiple biological processes as precursors of membrane lipids and lipid mediators. May be an anti-phosphatase that prevents CDKA-1 dephosphorylation and activation. Involved in the hormonal control of cell division and differentiation. Required for proliferation control of meristematic and non-meristematic cells. Negative regulator of the cell cycle. In Oryza sativa subsp. japonica (Rice), this protein is Very-long-chain (3R)-3-hydroxyacyl-CoA dehydratase PASTICCINO 2A (PAS2A).